The chain runs to 186 residues: Large ribosomal subunit protein uL5 (186 aa).

Belongs to the universal ribosomal protein uL5 family. As to quaternary structure, part of the 50S ribosomal subunit; contacts the 5S rRNA and probably tRNA. Forms a bridge to the 30S subunit in the 70S ribosome.

This is one of the proteins that bind and probably mediate the attachment of the 5S RNA into the large ribosomal subunit, where it forms part of the central protuberance. In the 70S ribosome it contacts protein S13 of the 30S subunit (bridge B1b), connecting the 2 subunits; this bridge is implicated in subunit movement. May contact the P site tRNA; the 5S rRNA and some of its associated proteins might help stabilize positioning of ribosome-bound tRNAs. In Pyrococcus furiosus (strain ATCC 43587 / DSM 3638 / JCM 8422 / Vc1), this protein is Large ribosomal subunit protein uL5.